We begin with the raw amino-acid sequence, 206 residues long: Thiamine-phosphate synthase (206 aa).

Residues 38–42 and Asn70 each bind 4-amino-2-methyl-5-(diphosphooxymethyl)pyrimidine; that span reads QLREK. Mg(2+) is bound by residues Asp71 and Asp90. Position 109 (Thr109) interacts with 4-amino-2-methyl-5-(diphosphooxymethyl)pyrimidine. 135 to 137 is a binding site for 2-[(2R,5Z)-2-carboxy-4-methylthiazol-5(2H)-ylidene]ethyl phosphate; sequence TST. Lys138 serves as a coordination point for 4-amino-2-methyl-5-(diphosphooxymethyl)pyrimidine. 2-[(2R,5Z)-2-carboxy-4-methylthiazol-5(2H)-ylidene]ethyl phosphate contacts are provided by residues Gly165 and 185–186; that span reads VS.

It belongs to the thiamine-phosphate synthase family. Mg(2+) is required as a cofactor.

The enzyme catalyses 2-[(2R,5Z)-2-carboxy-4-methylthiazol-5(2H)-ylidene]ethyl phosphate + 4-amino-2-methyl-5-(diphosphooxymethyl)pyrimidine + 2 H(+) = thiamine phosphate + CO2 + diphosphate. It catalyses the reaction 2-(2-carboxy-4-methylthiazol-5-yl)ethyl phosphate + 4-amino-2-methyl-5-(diphosphooxymethyl)pyrimidine + 2 H(+) = thiamine phosphate + CO2 + diphosphate. The catalysed reaction is 4-methyl-5-(2-phosphooxyethyl)-thiazole + 4-amino-2-methyl-5-(diphosphooxymethyl)pyrimidine + H(+) = thiamine phosphate + diphosphate. The protein operates within cofactor biosynthesis; thiamine diphosphate biosynthesis; thiamine phosphate from 4-amino-2-methyl-5-diphosphomethylpyrimidine and 4-methyl-5-(2-phosphoethyl)-thiazole: step 1/1. In terms of biological role, condenses 4-methyl-5-(beta-hydroxyethyl)thiazole monophosphate (THZ-P) and 2-methyl-4-amino-5-hydroxymethyl pyrimidine pyrophosphate (HMP-PP) to form thiamine monophosphate (TMP). The polypeptide is Thiamine-phosphate synthase (Fusobacterium nucleatum subsp. nucleatum (strain ATCC 25586 / DSM 15643 / BCRC 10681 / CIP 101130 / JCM 8532 / KCTC 2640 / LMG 13131 / VPI 4355)).